Reading from the N-terminus, the 158-residue chain is Salt stress-responsive protein YocM (158 aa).

The 108-residue stretch at 51 to 158 (GKGDASFPSM…GQAKTIVIDD (108 aa)) folds into the sHSP domain.

This sequence belongs to the small heat shock protein (HSP20) family. Forms homodimers, homotetramers and higher oligomers.

It localises to the cytoplasm. Part of the cellular protein quality control system with a specific role in salt stress response. May facilitate protein homeostasis, together with chemical chaperones that accumulate during the salt stress response. Increased levels of YocM protects against both heat and salt stress. In vitro, displays an unusual aggregase chaperone activity. In Bacillus subtilis (strain 168), this protein is Salt stress-responsive protein YocM (yocM).